A 255-amino-acid polypeptide reads, in one-letter code: Phosphate import ATP-binding protein PstB (255 aa).

The ABC transporter domain occupies 8-250 (IKSSNLNVHY…PGNKMTQDYI (243 aa)). 40 to 47 (GPSGCGKS) is a binding site for ATP.

It belongs to the ABC transporter superfamily. Phosphate importer (TC 3.A.1.7) family. The complex is composed of two ATP-binding proteins (PstB), two transmembrane proteins (PstC and PstA) and a solute-binding protein (PstS).

It localises to the cell inner membrane. It carries out the reaction phosphate(out) + ATP + H2O = ADP + 2 phosphate(in) + H(+). Functionally, part of the ABC transporter complex PstSACB involved in phosphate import. Responsible for energy coupling to the transport system. This is Phosphate import ATP-binding protein PstB from Pelagibacter ubique (strain HTCC1062).